We begin with the raw amino-acid sequence, 377 residues long: 3-dehydroquinate synthase (377 aa).

NAD(+) is bound by residues 115-119 (GVIGD), 139-140 (TS), K152, and K161. Residues E194, H256, and H275 each coordinate Zn(2+).

Belongs to the sugar phosphate cyclases superfamily. Dehydroquinate synthase family. The cofactor is NAD(+). It depends on Co(2+) as a cofactor. Requires Zn(2+) as cofactor.

Its subcellular location is the cytoplasm. It carries out the reaction 7-phospho-2-dehydro-3-deoxy-D-arabino-heptonate = 3-dehydroquinate + phosphate. Its pathway is metabolic intermediate biosynthesis; chorismate biosynthesis; chorismate from D-erythrose 4-phosphate and phosphoenolpyruvate: step 2/7. In terms of biological role, catalyzes the conversion of 3-deoxy-D-arabino-heptulosonate 7-phosphate (DAHP) to dehydroquinate (DHQ). This chain is 3-dehydroquinate synthase, found in Rhizobium meliloti (strain 1021) (Ensifer meliloti).